Here is a 512-residue protein sequence, read N- to C-terminus: GMP synthase [glutamine-hydrolyzing] (512 aa).

One can recognise a Glutamine amidotransferase type-1 domain in the interval 3-196; sequence NILILDFGSQ…VKHICQASET (194 aa). The active-site Nucleophile is the Cys80. Catalysis depends on residues His169 and Glu171. Positions 197-387 constitute a GMPS ATP-PPase domain; sequence WKIETIEKQL…LGLPDVLISR (191 aa). 225 to 231 lines the ATP pocket; that stretch reads SGGVDSS.

As to quaternary structure, homodimer.

The catalysed reaction is XMP + L-glutamine + ATP + H2O = GMP + L-glutamate + AMP + diphosphate + 2 H(+). It functions in the pathway purine metabolism; GMP biosynthesis; GMP from XMP (L-Gln route): step 1/1. Its function is as follows. Catalyzes the synthesis of GMP from XMP. In Chlamydia caviae (strain ATCC VR-813 / DSM 19441 / 03DC25 / GPIC) (Chlamydophila caviae), this protein is GMP synthase [glutamine-hydrolyzing].